Reading from the N-terminus, the 522-residue chain is Transcription factor SPT20 homolog (522 aa).

Phosphoserine is present on S284. Disordered regions lie at residues 361-380 (DEESDSQMSPSHSSTDDHSN) and 408-522 (PVKM…RHES). A compositionally biased stretch (low complexity) spans 412 to 425 (SHSSSGSASLSQVS). Positions 433–442 (TETVSVQSSV) are enriched in polar residues. Positions 458–467 (SSSGNSSSGN) are enriched in low complexity. The segment covering 481 to 492 (PTPPPSSKPPTI) has biased composition (pro residues). The residue at position 482 (T482) is a Phosphothreonine. Over residues 506 to 522 (LSPAALSPASSSQRHES) the composition is skewed to low complexity. 2 positions are modified to phosphoserine: S507 and S512.

This sequence belongs to the SPT20 family. Interacts with ATG9A. Interacts with MAPK14.

Required for MAP kinase p38 (MAPK11, MAPK12, MAPK13 and/or MAPK14) activation during gastrulation. Required for down-regulation of E-cadherin during gastrulation by regulating E-cadherin protein level downstream from NCK-interacting kinase (NIK) and independently of the regulation of transcription by FGF signaling and Snail. Required for starvation-induced ATG9A trafficking during autophagy. This is Transcription factor SPT20 homolog (SUPT20H) from Pongo abelii (Sumatran orangutan).